Reading from the N-terminus, the 199-residue chain is Recombination protein RecR (199 aa).

The C4-type zinc-finger motif lies at 57–72 (CEKCNNFTEEVVCELC). One can recognise a Toprim domain in the interval 80 to 175 (ALLCVVEMPA…KITRIARGLP (96 aa)).

Belongs to the RecR family.

Functionally, may play a role in DNA repair. It seems to be involved in an RecBC-independent recombinational process of DNA repair. It may act with RecF and RecO. This is Recombination protein RecR from Nitrosospira multiformis (strain ATCC 25196 / NCIMB 11849 / C 71).